We begin with the raw amino-acid sequence, 365 residues long: MQVQLTNRQQHILWATVRHYIATAEPVGSKALVEEYDLGVSSATIRNVMGVLEKSGLLYQPHTSAGRVPSDSGYRIYVDQLITPSLRDTTRTEVLAKEVESALQQHLQWEDWSLEILLQGAAQILASLSGCISLITMPQTNTASVRHLQLVQIETGRIMLILVTDSYETHSKLMDLPPARSETKPDPEVIDRELQIVSNFLNSHLRGRSLLEISTLDWSQLDREFQSYGEFLKNSVAELAHRSAAPAATQIMVRGLAEVLRQPEFSQLQQVKTIIQLLEEEQEQLWRLIFEEPELEDTHKSKVTVRIGAENPLEPIRTCSLISSTYRRGGVPLGSVGVLGPTRLDYESAIAVVAAAADYLSEAFS.

This sequence belongs to the HrcA family.

Its function is as follows. Negative regulator of class I heat shock genes (grpE-dnaK-dnaJ and groELS operons). Prevents heat-shock induction of these operons. The chain is Heat-inducible transcription repressor HrcA from Trichormus variabilis (strain ATCC 29413 / PCC 7937) (Anabaena variabilis).